A 187-amino-acid chain; its full sequence is Abscisic acid receptor PYL9 (187 aa).

The START-like stretch occupies residues H27–E178. 2 disulfide bridges follow: C29–C159 and C34–C159. Residues K63, A91 to E96, R118 to S124, and E143 each bind abscisate. The Gate loop motif lies at S87 to A91. The short motif at H117–L119 is the Latch loop element.

The protein belongs to the PYR/PYL/RCAR abscisic acid intracellular receptor family. In terms of assembly, homodimer. Monomer. Binds ABA on one subunit only. Binds to CARs protein in an ABA-independent manner, both at the plasma membrane and in the nucleus. Binds specifically (+)-ABA but not (-)-ABA. Interacts with HAB1, ABI1 and ABI2, and possibly with other PP2Cs. Interacts with TOPP1. Interacts with DDA1. As to expression, expressed in root tips, vascular tissues, stomata, flowers, pollen tubes and developing seeds.

It is found in the cytoplasm. It localises to the nucleus. The protein localises to the cell membrane. Receptor for abscisic acid (ABA) required for ABA-mediated responses such as stomatal closure and germination inhibition. Inhibits the activity of group-A protein phosphatases type 2C (PP2Cs) in an ABA-independent manner but more efficiently when activated by ABA. Confers enhanced sensitivity to ABA. Can be activated only by (+)-ABA but not by (-)-ABA. The polypeptide is Abscisic acid receptor PYL9 (PYL9) (Arabidopsis thaliana (Mouse-ear cress)).